The following is an 81-amino-acid chain: LYR motif-containing protein 4 (81 aa).

Belongs to the complex I LYR family.

It is found in the mitochondrion. Its subcellular location is the nucleus. The protein operates within cofactor biosynthesis; iron-sulfur cluster biosynthesis. Required for nuclear and mitochondrial iron-sulfur protein biosynthesis. This is LYR motif-containing protein 4 (lyrm4) from Dictyostelium discoideum (Social amoeba).